The sequence spans 501 residues: Glycerol kinase (501 aa).

ADP is bound at residue Thr-17. ATP contacts are provided by Thr-17, Thr-18, and Ser-19. Thr-17 is a binding site for sn-glycerol 3-phosphate. Arg-21 contacts ADP. Residues Arg-87, Glu-88, Tyr-139, and Asp-243 each coordinate sn-glycerol 3-phosphate. Positions 87, 88, 139, 243, and 244 each coordinate glycerol. Residues Thr-265 and Gly-308 each coordinate ADP. Residues Thr-265, Gly-308, Gln-312, and Gly-409 each contribute to the ATP site. Gly-409 and Asn-413 together coordinate ADP.

Belongs to the FGGY kinase family.

The catalysed reaction is glycerol + ATP = sn-glycerol 3-phosphate + ADP + H(+). Its pathway is polyol metabolism; glycerol degradation via glycerol kinase pathway; sn-glycerol 3-phosphate from glycerol: step 1/1. With respect to regulation, inhibited by fructose 1,6-bisphosphate (FBP). Its function is as follows. Key enzyme in the regulation of glycerol uptake and metabolism. Catalyzes the phosphorylation of glycerol to yield sn-glycerol 3-phosphate. This is Glycerol kinase from Pseudomonas fluorescens (strain ATCC BAA-477 / NRRL B-23932 / Pf-5).